We begin with the raw amino-acid sequence, 320 residues long: N-acetylneuraminate lyase (320 aa).

Aceneuramate is bound by residues threonine 51 and threonine 52. Tyrosine 143 serves as the catalytic Proton donor. Lysine 173 (schiff-base intermediate with substrate) is an active-site residue. Residues serine 175, glycine 199, aspartate 201, glutamate 202, and serine 218 each contribute to the aceneuramate site.

It belongs to the DapA family. NanA subfamily. In terms of assembly, homotetramer.

Its subcellular location is the cytoplasm. The enzyme catalyses aceneuramate = aldehydo-N-acetyl-D-mannosamine + pyruvate. It participates in amino-sugar metabolism; N-acetylneuraminate degradation. Functionally, catalyzes the cleavage of N-acetylneuraminic acid (sialic acid) to form pyruvate and N-acetylmannosamine via a Schiff base intermediate. It prevents sialic acids from being recycled and returning to the cell surface. Involved in the N-glycolylneuraminic acid (Neu5Gc) degradation pathway. The sequence is that of N-acetylneuraminate lyase from Rattus norvegicus (Rat).